A 378-amino-acid polypeptide reads, in one-letter code: DNA replication and repair protein RecF (378 aa).

30–37 contributes to the ATP binding site; sequence GRNGQGKT.

It belongs to the RecF family.

The protein resides in the cytoplasm. In terms of biological role, the RecF protein is involved in DNA metabolism; it is required for DNA replication and normal SOS inducibility. RecF binds preferentially to single-stranded, linear DNA. It also seems to bind ATP. The protein is DNA replication and repair protein RecF of Frankia alni (strain DSM 45986 / CECT 9034 / ACN14a).